The following is a 226-amino-acid chain: Cytochrome c oxidase subunit 2 (226 aa).

Topologically, residues 1-25 (MNTWLLSLQNSNSPTYDMMIFFHDF) are mitochondrial intermembrane. A helical transmembrane segment spans residues 26–47 (TMMILIFITLLILFIMFTMINN). Over 48-61 (NLINRFLLQGHFIE) the chain is Mitochondrial matrix. The helical transmembrane segment at 62-81 (LIWTITPMIILILIAIPSFK) threads the bilayer. At 82-226 (ILYLTDEMFN…YFKNWLKSFL (145 aa)) the chain is on the mitochondrial intermembrane side. Cu cation-binding residues include His-160, Cys-195, Glu-197, Cys-199, His-203, and Met-206. Glu-197 provides a ligand contact to Mg(2+).

It belongs to the cytochrome c oxidase subunit 2 family. Component of the cytochrome c oxidase (complex IV, CIV), a multisubunit enzyme composed of a catalytic core of 3 subunits and several supernumerary subunits. The complex exists as a monomer or a dimer and forms supercomplexes (SCs) in the inner mitochondrial membrane with ubiquinol-cytochrome c oxidoreductase (cytochrome b-c1 complex, complex III, CIII). The cofactor is Cu cation.

The protein localises to the mitochondrion inner membrane. The enzyme catalyses 4 Fe(II)-[cytochrome c] + O2 + 8 H(+)(in) = 4 Fe(III)-[cytochrome c] + 2 H2O + 4 H(+)(out). Functionally, component of the cytochrome c oxidase, the last enzyme in the mitochondrial electron transport chain which drives oxidative phosphorylation. The respiratory chain contains 3 multisubunit complexes succinate dehydrogenase (complex II, CII), ubiquinol-cytochrome c oxidoreductase (cytochrome b-c1 complex, complex III, CIII) and cytochrome c oxidase (complex IV, CIV), that cooperate to transfer electrons derived from NADH and succinate to molecular oxygen, creating an electrochemical gradient over the inner membrane that drives transmembrane transport and the ATP synthase. Cytochrome c oxidase is the component of the respiratory chain that catalyzes the reduction of oxygen to water. Electrons originating from reduced cytochrome c in the intermembrane space (IMS) are transferred via the dinuclear copper A center (CU(A)) of subunit 2 and heme A of subunit 1 to the active site in subunit 1, a binuclear center (BNC) formed by heme A3 and copper B (CU(B)). The BNC reduces molecular oxygen to 2 water molecules using 4 electrons from cytochrome c in the IMS and 4 protons from the mitochondrial matrix. This chain is Cytochrome c oxidase subunit 2 (COII), found in Lasius sp.